We begin with the raw amino-acid sequence, 302 residues long: Urease accessory protein UreD 2 (302 aa).

This sequence belongs to the UreD family. As to quaternary structure, ureD, UreF and UreG form a complex that acts as a GTP-hydrolysis-dependent molecular chaperone, activating the urease apoprotein by helping to assemble the nickel containing metallocenter of UreC. The UreE protein probably delivers the nickel.

The protein localises to the cytoplasm. Its function is as follows. Required for maturation of urease via the functional incorporation of the urease nickel metallocenter. The polypeptide is Urease accessory protein UreD 2 (Brucella canis (strain ATCC 23365 / NCTC 10854 / RM-666)).